The sequence spans 433 residues: Ribosomal RNA small subunit methyltransferase B (433 aa).

S-adenosyl-L-methionine-binding positions include 254 to 260 (CAAPGGK), aspartate 277, aspartate 303, and aspartate 322. Cysteine 375 serves as the catalytic Nucleophile.

Belongs to the class I-like SAM-binding methyltransferase superfamily. RsmB/NOP family.

The protein resides in the cytoplasm. It carries out the reaction cytidine(967) in 16S rRNA + S-adenosyl-L-methionine = 5-methylcytidine(967) in 16S rRNA + S-adenosyl-L-homocysteine + H(+). In terms of biological role, specifically methylates the cytosine at position 967 (m5C967) of 16S rRNA. The polypeptide is Ribosomal RNA small subunit methyltransferase B (Sodalis glossinidius (strain morsitans)).